We begin with the raw amino-acid sequence, 904 residues long: Protein translocase subunit SecA (904 aa).

Residues glutamine 89, 107 to 111, and aspartate 496 contribute to the ATP site; that span reads GEGKT. The disordered stretch occupies residues 870–904; sequence GGFQELSSGTPSPTVTVTTSSGGGTERKTSRRRKR. Residues 876 to 889 are compositionally biased toward low complexity; it reads SSGTPSPTVTVTTS.

Belongs to the SecA family. Monomer and homodimer. Part of the essential Sec protein translocation apparatus which comprises SecA, SecYEG and auxiliary proteins SecDF. Other proteins may also be involved.

It is found in the cell inner membrane. The protein resides in the cytoplasm. The enzyme catalyses ATP + H2O + cellular proteinSide 1 = ADP + phosphate + cellular proteinSide 2.. Its function is as follows. Part of the Sec protein translocase complex. Interacts with the SecYEG preprotein conducting channel. Has a central role in coupling the hydrolysis of ATP to the transfer of proteins into and across the cell membrane, serving as an ATP-driven molecular motor driving the stepwise translocation of polypeptide chains across the membrane. The protein is Protein translocase subunit SecA of Leptospira borgpetersenii serovar Hardjo-bovis (strain JB197).